Reading from the N-terminus, the 861-residue chain is Xylan 1,4-beta-xylosidase (861 aa).

The signal sequence occupies residues 1-19; sequence MKYQLFLSLALCVGLGASA. Asp269 acts as the Nucleophile in catalysis. In terms of domain architecture, PA14 spans 458 to 600; that stretch reads DGKKGLKGTF…DYQETIAQLK (143 aa). The active-site Proton donor/acceptor is Glu616.

The protein belongs to the glycosyl hydrolase 3 family. Exists as a large polymeric species, presumably as a homononamer.

It catalyses the reaction Hydrolysis of (1-&gt;4)-beta-D-xylans, to remove successive D-xylose residues from the non-reducing termini.. It carries out the reaction Hydrolysis of terminal non-reducing alpha-L-arabinofuranoside residues in alpha-L-arabinosides.. The protein operates within glycan degradation; xylan degradation. Functionally, involved in degradation of plant cell wall polysaccharides. Has beta-xylosidase activity via its capacity to hydrolyze glycosidic linkages of beta-1,4-xylo-oligosaccharides of various lengths (X2 to X6), releasing xylose monomers. To a much lesser extent, also has alpha-L-arabinofuranosidase activity. Does not possess beta-D-glucosidase activity. Acts synergistically with Xyn10D-Fae1A to increase the release of xylose from xylan. This chain is Xylan 1,4-beta-xylosidase, found in Xylanibacter ruminicola (strain ATCC 19189 / DSM 19721 / CIP 105475 / JCM 8958 / 23) (Prevotella ruminicola).